Reading from the N-terminus, the 130-residue chain is Small ribosomal subunit protein uS8 (130 aa).

Belongs to the universal ribosomal protein uS8 family. In terms of assembly, part of the 30S ribosomal subunit.

Functionally, one of the primary rRNA binding proteins, it binds directly to 16S rRNA central domain where it helps coordinate assembly of the platform of the 30S subunit. This Methanococcus maripaludis (strain C7 / ATCC BAA-1331) protein is Small ribosomal subunit protein uS8.